The following is a 435-amino-acid chain: Diguanylate cyclase TpbB (435 aa).

Residues 1–22 (MNRRRRYTGSNPSLRRVLYRAH) lie on the Cytoplasmic side of the membrane. The helical transmembrane segment at 23-43 (LGVALVAVFTAGLAVTLVGLL) threads the bilayer. Residues 44–154 (TLRAYADPNQ…VKGSGGSLLR (111 aa)) are Periplasmic-facing. Residues 155–175 (FLLTGFAGMVLCLLLTALGAF) traverse the membrane as a helical segment. Residues 176-435 (YLSRRLVRGI…DSATPEAPPK (260 aa)) are Cytoplasmic-facing. Residues 183 to 236 (RGIVGPLDQLAKVAHTVRRERDFEKRVPEAGIAELSQLGEDFNALLDELESWQA) enclose the HAMP domain. Positions 279–415 (EQLAVLFIDS…GSRRLAELND (137 aa)) constitute a GGDEF domain. Mg(2+)-binding residues include Ser288 and Asp330. The active-site Proton acceptor is Asp330. Basic and acidic residues predominate over residues 414–426 (NDPRILQEEKEID). Residues 414–435 (NDPRILQEEKEIDSATPEAPPK) are disordered.

It depends on Mg(2+) as a cofactor. In terms of processing, phosphorylated at both Tyr residues and Ser/Thr residues. Dephosphorylated and inactivated by TpbA.

It localises to the cell inner membrane. It catalyses the reaction 2 GTP = 3',3'-c-di-GMP + 2 diphosphate. It functions in the pathway purine metabolism; 3',5'-cyclic di-GMP biosynthesis. With respect to regulation, activity is tightly controlled by YfiR, a small periplasmic protein, and the OmpA/Pal-like outer-membrane lipoprotein YfiB. Diguanylate cyclase activity is inhibited by the specific interaction of YfiR with the TpbB periplasmic domain and is activated by YfiB, which releases the YfiR-mediated repression through sequestration of YfiR to the outer membrane. Activity is also controlled by dephosphorylation of the periplasmic domain by the tyrosine phosphatase TpbA. Catalyzes the synthesis of cyclic-di-GMP (c-di-GMP) via the condensation of 2 GTP molecules. Important for the regulation of biofilm maintenance when exposed to peroxide. In terms of biological role, part of the YfiB-TpbB-YfiR (or yfiBNR) system, encoding a tripartite signaling module that modulates intracellular c-di-GMP levels. The system is a key regulator of the small colony variant (SCV) phenotype, and plays an important role in biofilm formation and in vivo persistence. The c-di-GMP produced by TpbB/YfiN stimulates the production of the Pel and Psl exopolysaccharides, which promotes surface attachment, generates an SCV phenotype and confers resistance against phagocytosis. The protein is Diguanylate cyclase TpbB of Pseudomonas aeruginosa (strain UCBPP-PA14).